Consider the following 391-residue polypeptide: Alanine racemase, biosynthetic (391 aa).

Lys52 (proton acceptor; specific for D-alanine) is an active-site residue. Lys52 carries the post-translational modification N6-(pyridoxal phosphate)lysine. Residue Arg149 coordinates substrate. Tyr271 functions as the Proton acceptor; specific for L-alanine in the catalytic mechanism. Residue Met330 participates in substrate binding.

This sequence belongs to the alanine racemase family. Pyridoxal 5'-phosphate is required as a cofactor.

It carries out the reaction L-alanine = D-alanine. Its pathway is amino-acid biosynthesis; D-alanine biosynthesis; D-alanine from L-alanine: step 1/1. It functions in the pathway cell wall biogenesis; peptidoglycan biosynthesis. Its function is as follows. Catalyzes the interconversion of L-alanine and D-alanine. Provides the D-alanine required for cell wall biosynthesis. This chain is Alanine racemase, biosynthetic (alr), found in Agrobacterium fabrum (strain C58 / ATCC 33970) (Agrobacterium tumefaciens (strain C58)).